The following is a 328-amino-acid chain: Opticin (328 aa).

An N-terminal signal peptide occupies residues 1–19; sequence MKFLAFLSLLSLVLQKAET. N-linked (GlcNAc...) asparagine glycosylation occurs at asparagine 46. A Sulfotyrosine modification is found at tyrosine 69. Asparagine 80 and asparagine 101 each carry an N-linked (GlcNAc...) asparagine glycan. An LRRNT domain is found at 112–149; the sequence is LLNSQSSHGLPTCLVCVCLGSSVYCDDADLENIPPLPQ. LRR repeat units follow at residues 150–171, 174–195, 198–219, 244–265, 266–286, and 296–316; these read MTTY…DFKG, KLRR…ALRL, ALQD…PSGI, KLQF…LPLS, LRSL…TFCD, and QLED…PEAY. Cysteines 285 and 318 form a disulfide. A glycan (N-linked (GlcNAc...) asparagine) is linked at asparagine 308.

This sequence belongs to the small leucine-rich proteoglycan (SLRP) family. SLRP class III subfamily. In terms of assembly, homodimer. In terms of processing, O-glycosylated. Post-translationally, sulfated on tyrosine residues. Proteolytically cleaved by MMP1, MMP2, MMP3, MMP7, MMP8, MMP9, ADAMTS4, and ADAMTS5. Proteolytically cleaved by MMP13. As to expression, expressed in cartilage (at protein level). Expressed in the vitreous collagen, inner limiting membrane, lens capsule, trabecular meshwork, anterior surface of the iris, the area adjacent to the nonpigmented ciliary epithelium, and weakly expressed in the retina of the eye (at protein level). Expressed in the nonpigmented ciliary epithelium of the eye.

Its subcellular location is the secreted. It is found in the extracellular space. The protein localises to the extracellular matrix. Inhibits angiogenesis in the vitreous humor of the eye, and therefore represses neovascularization. Binds collagen fibrils. May be involved in collagen fiber organization via regulation of other members of the small leucine-rich repeat proteoglycan superfamily. The polypeptide is Opticin (Optc) (Mus musculus (Mouse)).